Consider the following 435-residue polypeptide: Elongation factor 1-alpha (435 aa).

In terms of domain architecture, tr-type G spans 4 to 229 (KPHLNLIVIG…DQLEIPPKPV (226 aa)). A G1 region spans residues 13–20 (GHVDHGKS). Residue 13–20 (GHVDHGKS) coordinates GTP. Serine 20 contributes to the Mg(2+) binding site. Residues 69–73 (GVTIN) form a G2 region. Positions 90-93 (DAPG) are G3. GTP-binding positions include 90-94 (DAPGH) and 152-155 (NKMD). The tract at residues 152-155 (NKMD) is G4. Residues 193–195 (VAP) are G5.

It belongs to the TRAFAC class translation factor GTPase superfamily. Classic translation factor GTPase family. EF-Tu/EF-1A subfamily.

The protein localises to the cytoplasm. It carries out the reaction GTP + H2O = GDP + phosphate + H(+). In terms of biological role, GTP hydrolase that promotes the GTP-dependent binding of aminoacyl-tRNA to the A-site of ribosomes during protein biosynthesis. The polypeptide is Elongation factor 1-alpha (Sulfolobus acidocaldarius (strain ATCC 33909 / DSM 639 / JCM 8929 / NBRC 15157 / NCIMB 11770)).